The chain runs to 165 residues: Large ribosomal subunit protein uL10 (165 aa).

This sequence belongs to the universal ribosomal protein uL10 family. In terms of assembly, part of the ribosomal stalk of the 50S ribosomal subunit. The N-terminus interacts with L11 and the large rRNA to form the base of the stalk. The C-terminus forms an elongated spine to which L12 dimers bind in a sequential fashion forming a multimeric L10(L12)X complex.

In terms of biological role, forms part of the ribosomal stalk, playing a central role in the interaction of the ribosome with GTP-bound translation factors. The polypeptide is Large ribosomal subunit protein uL10 (Pectobacterium carotovorum subsp. carotovorum (strain PC1)).